Here is a 124-residue protein sequence, read N- to C-terminus: Large ribosomal subunit protein bL12 (124 aa).

Belongs to the bacterial ribosomal protein bL12 family. In terms of assembly, homodimer. Part of the ribosomal stalk of the 50S ribosomal subunit. Forms a multimeric L10(L12)X complex, where L10 forms an elongated spine to which 2 to 4 L12 dimers bind in a sequential fashion. Binds GTP-bound translation factors.

Functionally, forms part of the ribosomal stalk which helps the ribosome interact with GTP-bound translation factors. Is thus essential for accurate translation. The sequence is that of Large ribosomal subunit protein bL12 from Pelodictyon phaeoclathratiforme (strain DSM 5477 / BU-1).